Consider the following 330-residue polypeptide: Ketol-acid reductoisomerase (NADP(+)) (330 aa).

The KARI N-terminal Rossmann domain maps to 1 to 181; it reads MKVFYDSDFK…GLSRAGVIQT (181 aa). NADP(+) contacts are provided by residues 24–27, arginine 47, serine 52, and 82–85; these read YGSQ and DELQ. Histidine 107 is a catalytic residue. Glycine 133 is a binding site for NADP(+). Positions 182-327 constitute a KARI C-terminal knotted domain; that stretch reads TFKEETETDL…AKLRKMCGLE (146 aa). 4 residues coordinate Mg(2+): aspartate 190, glutamate 194, glutamate 226, and glutamate 230. Serine 251 is a binding site for substrate.

This sequence belongs to the ketol-acid reductoisomerase family. Mg(2+) serves as cofactor.

It carries out the reaction (2R)-2,3-dihydroxy-3-methylbutanoate + NADP(+) = (2S)-2-acetolactate + NADPH + H(+). The catalysed reaction is (2R,3R)-2,3-dihydroxy-3-methylpentanoate + NADP(+) = (S)-2-ethyl-2-hydroxy-3-oxobutanoate + NADPH + H(+). It participates in amino-acid biosynthesis; L-isoleucine biosynthesis; L-isoleucine from 2-oxobutanoate: step 2/4. The protein operates within amino-acid biosynthesis; L-valine biosynthesis; L-valine from pyruvate: step 2/4. In terms of biological role, involved in the biosynthesis of branched-chain amino acids (BCAA). Catalyzes an alkyl-migration followed by a ketol-acid reduction of (S)-2-acetolactate (S2AL) to yield (R)-2,3-dihydroxy-isovalerate. In the isomerase reaction, S2AL is rearranged via a Mg-dependent methyl migration to produce 3-hydroxy-3-methyl-2-ketobutyrate (HMKB). In the reductase reaction, this 2-ketoacid undergoes a metal-dependent reduction by NADPH to yield (R)-2,3-dihydroxy-isovalerate. In Methanococcus maripaludis (strain DSM 14266 / JCM 13030 / NBRC 101832 / S2 / LL), this protein is Ketol-acid reductoisomerase (NADP(+)).